The following is a 257-amino-acid chain: Probable septum site-determining protein MinC (257 aa).

Residues 123–141 (AVEAAAAPAAEPTPEPGAA) show a composition bias toward low complexity. Residues 123-144 (AVEAAAAPAAEPTPEPGAASQP) are disordered.

It belongs to the MinC family. As to quaternary structure, interacts with MinD and FtsZ.

Functionally, cell division inhibitor that blocks the formation of polar Z ring septums. Rapidly oscillates between the poles of the cell to destabilize FtsZ filaments that have formed before they mature into polar Z rings. Prevents FtsZ polymerization. The polypeptide is Probable septum site-determining protein MinC (Burkholderia multivorans (strain ATCC 17616 / 249)).